Reading from the N-terminus, the 94-residue chain is Large ribosomal subunit protein bL27 (94 aa).

Positions 1–9 (MLRLDLQFF) are excised as a propeptide.

Belongs to the bacterial ribosomal protein bL27 family. In terms of processing, the N-terminus is cleaved by ribosomal processing cysteine protease Prp.

In Bacillus pumilus (strain SAFR-032), this protein is Large ribosomal subunit protein bL27.